We begin with the raw amino-acid sequence, 208 residues long: UPF0637 protein BCG9842_B1177 (208 aa).

The protein belongs to the UPF0637 family.

This is UPF0637 protein BCG9842_B1177 from Bacillus cereus (strain G9842).